The chain runs to 517 residues: MAAPEQPLAISRGCTSSSSLSPPRGDRTLLVRHLPAELTAEEKEDLLKYFGAQSVRVLSDKGRLKHTAFATFPNEKAAIKALTRLHQLKLLGHTLVVEFAKEQDRVHSPCPTSGSEKKKRSDDPVEDDKEKKELGYLTVENGIAPNHGLTFPLNSCLKYMYPPPSSTILANIVNALASVPKFYVQVLHLMNKMNLPTPFGPITARPPMYEDYMPLHAPLPPTSPQPPEEPPLPEEDEELSSEESEYESTDDEDRQRMNKLMELANLQPKRPKTIKQRHVRKKRKIKDMLNTPLCPSHSSLHPVLLPSDVFDQPQPVGNKRIEFHISTDMPAAFKKDLEKEQNCEEKNHDLPATEVDASNIGFGKIFPKPNLDITEEIKEDSDEMPSECISRRELEKGRISREEMETLSVFRSYEPGEPNCRIYVKNLAKHVEEKDLKYIFGRYVDFSSETRRIMFDIRLMKEGRMKGQAFVGLPNEKAAAKALKEANGYVLFGKPMVVQFARSARPKQDPKEGKRKC.

The disordered stretch occupies residues 1-26; that stretch reads MAAPEQPLAISRGCTSSSSLSPPRGD. Ser21 carries the post-translational modification Phosphoserine. In terms of domain architecture, RRM 1 spans 27–102; the sequence is RTLLVRHLPA…HTLVVEFAKE (76 aa). 2 disordered regions span residues 106-130 and 213-254; these read VHSP…DDKE and MPLH…DEDR. Ser108 carries the post-translational modification Phosphoserine. Over residues 115-130 the composition is skewed to basic and acidic residues; the sequence is SEKKKRSDDPVEDDKE. Pro residues predominate over residues 217-230; it reads APLPPTSPQPPEEP. Residues 231-252 show a composition bias toward acidic residues; sequence PLPEEDEELSSEESEYESTDDE. The region spanning 420 to 503 is the RRM 2 domain; it reads CRIYVKNLAK…KPMVVQFARS (84 aa).

In terms of assembly, component of the U11/U12 snRNPs that are part of the U12-type spliceosome. Found in a complex with m(7)G-capped U12 snRNA. Interacts with PDCD7.

Its subcellular location is the nucleus. In terms of biological role, participates in pre-mRNA U12-dependent splicing, performed by the minor spliceosome which removes U12-type introns. U12-type introns comprises less than 1% of all non-coding sequences. Binds to the 3'-stem-loop of m(7)G-capped U12 snRNA. The protein is RNA-binding region-containing protein 3 (RNPC3) of Pongo abelii (Sumatran orangutan).